The following is a 441-amino-acid chain: Putative serine/threonine-protein kinase F31E3.2 (441 aa).

Residues 1–16 (MGNVATRKRPGCHHHI) are compositionally biased toward basic residues. Residues 1 to 41 (MGNVATRKRPGCHHHIGRNEENLDDDEDGPAKKRLRIGEPQ) are disordered. The Protein kinase domain occupies 126 to 381 (FVLERQLGRG…FTVLHAHPFF (256 aa)). ATP contacts are provided by residues 132–140 (LGRGSFGVV) and Lys156. Catalysis depends on Asp253, which acts as the Proton acceptor.

This sequence belongs to the protein kinase superfamily. Ser/Thr protein kinase family.

It catalyses the reaction L-seryl-[protein] + ATP = O-phospho-L-seryl-[protein] + ADP + H(+). The enzyme catalyses L-threonyl-[protein] + ATP = O-phospho-L-threonyl-[protein] + ADP + H(+). The protein is Putative serine/threonine-protein kinase F31E3.2 of Caenorhabditis elegans.